A 136-amino-acid chain; its full sequence is Putative pre-16S rRNA nuclease (136 aa).

This sequence belongs to the YqgF nuclease family.

It is found in the cytoplasm. Could be a nuclease involved in processing of the 5'-end of pre-16S rRNA. The chain is Putative pre-16S rRNA nuclease from Francisella tularensis subsp. holarctica (strain FTNF002-00 / FTA).